The sequence spans 318 residues: Phospholipid scramblase 1 (318 aa).

The span at 1 to 14 (MDKQNSQMNASHPE) shows a compositional bias: polar residues. The disordered stretch occupies residues 1–64 (MDKQNSQMNA…GPGPAGFPVP (64 aa)). Residues 1–84 (MDKQNSQMNA…NQPVGAAGVP (84 aa)) form a proline-rich domain (PRD) region. The Cytoplasmic segment spans residues 1–288 (MDKQNSQMNA…IQFPLDLDVK (288 aa)). Positions 18 to 26 (PVGYPPQYP) match the SH3-binding 1 motif. 2 consecutive short sequence motifs (PPXY motif) follow at residues 22–25 (PPQY) and 33–36 (PPGY). Low complexity predominate over residues 31–44 (QGPPGYSGYPGPQV). Residues 42–50 (PQVSYPPPP) carry the SH3-binding 2 motif. 2 positions are modified to phosphotyrosine; by ABL: Y69 and Y74. The SH3-binding 3 motif lies at 84-92 (PWMPAPQPP). Residues 99-290 (LEYLSQIDQI…FPLDLDVKMK (192 aa)) are interaction with hepatitis C virus E2 glycoprotein. T161 carries the post-translational modification Phosphothreonine; by PKC/PRKCD. S-palmitoyl cysteine attachment occurs at residues C184, C185, C186, C188, and C189. Positions 257 to 266 (GKISKHWTGI) match the Nuclear localization signal motif. The helical transmembrane segment at 289–305 (MKAVMIGACFLIDFMFF) threads the bilayer. At 306–318 (ESTGSQEQKSGVW) the chain is on the extracellular side.

It belongs to the phospholipid scramblase family. As to quaternary structure, forms homooligomers in the presence of calcium. Interacts with ABL. Interacts with RELT, RELL1 and RELL2. Interacts with OXSR1 in the presence of RELT. Interacts with TOP2A and TOP2B. Interacts with OCLN. Interacts with TRPC5. Interacts with TRPC1 and TRPC4. Interacts with ILDR1. In terms of assembly, (Microbial infection) Interacts with hepatitis C virus E1 and E2 glycoproteins. (Microbial infection) Interacts with T-cell leukemia virus (HTLV)-1 protein Tax (via N-terminus); this interaction represses Tax homodimerization. As to quaternary structure, (Microbial infection) Interacts with HIV-1 protein Tat; this interaction represses the Tat-dependent transactivation of the HIV-1 long terminal repeat (LTR) and reduces the nuclear translocation of Tat. In terms of assembly, (Microbial infection) Interacts with hepatitis B virus protein HBx; this interaction promotes the proteasomal degradation of HBx. (Microbial infection) Interacts with human cytomegalovirus proteins IE1 and IE2. As to quaternary structure, (Microbial infection) Interacts with Epstein Barr virus (EBV) lytic switch protein BZLF1; this interaction negatively regulates the transcriptional regulatory activity of BZLF1 by preventing the formation of the BZLF1-CBP complex. In terms of assembly, (Microbial infection) Interacts with influenza virus nucleoprotein NP. Requires Ca(2+) as cofactor. The cofactor is Mg(2+). It depends on Zn(2+) as a cofactor. Post-translationally, phosphorylation at Thr-161 by PKC/PKCD increases its phospholipid scramblase activity during both cell stimulation and apoptosis. Phosphorylated by OXSR1 in the presence of RELT. Palmitoylation is required for its phospholipid scramblase activity. Palmitoylation regulates its localization to the cell membrane or the nucleus; trafficking to the cell membrane is dependent upon palmitoylation whereas in the absence of palmitoylation, localizes to the nucleus. As to expression, expressed in platelets, erythrocyte membranes, lymphocytes, spleen, thymus, prostate, testis, uterus, intestine, colon, heart, placenta, lung, liver, kidney and pancreas. Not detected in brain and skeletal muscle.

The protein localises to the cell membrane. It localises to the nucleus. Its subcellular location is the cytoplasm. It is found in the perinuclear region. The catalysed reaction is a 1,2-diacyl-sn-glycero-3-phosphocholine(in) = a 1,2-diacyl-sn-glycero-3-phosphocholine(out). It catalyses the reaction a 1,2-diacyl-sn-glycero-3-phosphoethanolamine(in) = a 1,2-diacyl-sn-glycero-3-phosphoethanolamine(out). It carries out the reaction a 1,2-diacyl-sn-glycero-3-phospho-L-serine(in) = a 1,2-diacyl-sn-glycero-3-phospho-L-serine(out). Its activity is regulated as follows. Activated by Pb(2+) and Hg(2+) ions. Phosphorylation at Thr-161 by PKC/PKCD increases its phospholipid scramblase activity during both cell stimulation and apoptosis. Functionally, catalyzes calcium-induced ATP-independent rapid bidirectional and non-specific movement of phospholipids (lipid scrambling or lipid flip-flop) between the inner and outer leaflet of the plasma membrane resulting in collapse of the phospholipid asymmetry which leads to phosphatidylserine externalization on the cell surface. Mediates calcium-dependent phosphatidylserine externalization and apoptosis in neurons via its association with TRPC5. Also exhibits magnesium-dependent nuclease activity against double-stranded DNA and RNA but not single-stranded DNA and can enhance DNA decatenation mediated by TOP2A. Negatively regulates FcR-mediated phagocytosis in differentiated macrophages. May contribute to cytokine-regulated cell proliferation and differentiation. May play a role in the antiviral response of interferon (IFN) by amplifying and enhancing the IFN response through increased expression of select subset of potent antiviral genes. Inhibits the functions of viral transactivators, including human T-cell leukemia virus (HTLV)-1 protein Tax, human immunodeficiency virus (HIV)-1 Tat, human hepatitis B virus (HBV) HBx, Epstein-Barr virus (EBV) BZLF1 and human cytomegalovirus IE1 and IE2 proteins through direct interactions. Also mediates the inhibition of influenza virus infection by preventing nuclear import of the viral nucleoprotein/NP. Plays a crucial role as a defense factor against SARS-CoV-2 independently of its scramblase activity by directly targeting nascent viral vesicles to prevent virus-membrane fusion and the release of viral RNA into the host-cell cytosol. (Microbial infection) Acts as an attachment receptor for HCV. This Homo sapiens (Human) protein is Phospholipid scramblase 1 (PLSCR1).